A 375-amino-acid chain; its full sequence is N5-carboxyaminoimidazole ribonucleotide synthase (375 aa).

ATP-binding positions include Arg-108, Lys-148, 153-159, 183-186, Glu-191, His-214, and 266-267; these read GYDGKGQ, EQYL, and NE. An ATP-grasp domain is found at 112-296; that stretch reads KQTLLEANTQ…QFDTHILAIT (185 aa).

This sequence belongs to the PurK/PurT family. Homodimer.

The enzyme catalyses 5-amino-1-(5-phospho-beta-D-ribosyl)imidazole + hydrogencarbonate + ATP = 5-carboxyamino-1-(5-phospho-D-ribosyl)imidazole + ADP + phosphate + 2 H(+). Its pathway is purine metabolism; IMP biosynthesis via de novo pathway; 5-amino-1-(5-phospho-D-ribosyl)imidazole-4-carboxylate from 5-amino-1-(5-phospho-D-ribosyl)imidazole (N5-CAIR route): step 1/2. In terms of biological role, catalyzes the ATP-dependent conversion of 5-aminoimidazole ribonucleotide (AIR) and HCO(3)(-) to N5-carboxyaminoimidazole ribonucleotide (N5-CAIR). This Staphylococcus epidermidis (strain ATCC 12228 / FDA PCI 1200) protein is N5-carboxyaminoimidazole ribonucleotide synthase.